Here is a 378-residue protein sequence, read N- to C-terminus: Alpha-D-ribose 1-methylphosphonate 5-triphosphate diphosphatase (378 aa).

This sequence belongs to the metallo-dependent hydrolases superfamily.

It carries out the reaction alpha-D-ribose 1-methylphosphonate 5-triphosphate + H2O = alpha-D-ribose 1-methylphosphonate 5-phosphate + diphosphate + H(+). Catalyzes the hydrolysis of alpha-D-ribose 1-methylphosphonate triphosphate (RPnTP) to form alpha-D-ribose 1-methylphosphonate phosphate (PRPn) and diphosphate. This is Alpha-D-ribose 1-methylphosphonate 5-triphosphate diphosphatase (phnM) from Escherichia coli (strain K12).